A 340-amino-acid polypeptide reads, in one-letter code: Protein pelota homolog (340 aa).

This sequence belongs to the eukaryotic release factor 1 family. Pelota subfamily. As to quaternary structure, monomer. A divalent metal cation serves as cofactor.

It localises to the cytoplasm. May function in recognizing stalled ribosomes, interact with stem-loop structures in stalled mRNA molecules, and effect endonucleolytic cleavage of the mRNA. May play a role in the release non-functional ribosomes and degradation of damaged mRNAs. Has endoribonuclease activity. The chain is Protein pelota homolog from Methanosphaerula palustris (strain ATCC BAA-1556 / DSM 19958 / E1-9c).